A 61-amino-acid polypeptide reads, in one-letter code: Insect toxin AaHIT5 (61 aa).

The 61-residue stretch at 1-61 (DGYIKRHDGC…AWKSETNTCD (61 aa)) folds into the LCN-type CS-alpha/beta domain. Disulfide bonds link cysteine 10-cysteine 60, cysteine 14-cysteine 35, cysteine 21-cysteine 42, and cysteine 25-cysteine 44.

In terms of tissue distribution, expressed by the venom gland.

It localises to the secreted. Its function is as follows. Excitatory insect toxins induce a spastic paralysis. They bind voltage-independently to sodium channels (Nav) and shift the voltage of activation toward more negative potentials thereby affecting sodium channel activation and promoting spontaneous and repetitive firing. This toxin elicits excitatory activity with no flaccid paralysis despite its high degree of sequence similarity with other depressant insect toxins. This toxin is active only on insects. The sequence is that of Insect toxin AaHIT5 from Androctonus australis (Sahara scorpion).